Consider the following 441-residue polypeptide: Queuine tRNA-ribosyltransferase accessory subunit 2 (441 aa).

The Zn(2+) site is built by Cys307, Cys309, Cys312, and His338.

The protein belongs to the queuine tRNA-ribosyltransferase family. QTRT2 subfamily. Heterodimer of a catalytic subunit and an accessory subunit. It depends on Zn(2+) as a cofactor.

The protein localises to the cytoplasm. Its function is as follows. Non-catalytic subunit of the queuine tRNA-ribosyltransferase (TGT) that catalyzes the base-exchange of a guanine (G) residue with queuine (Q) at position 34 (anticodon wobble position) in tRNAs with GU(N) anticodons (tRNA-Asp, -Asn, -His and -Tyr), resulting in the hypermodified nucleoside queuosine (7-(((4,5-cis-dihydroxy-2-cyclopenten-1-yl)amino)methyl)-7-deazaguanosine). This chain is Queuine tRNA-ribosyltransferase accessory subunit 2 (qtr2), found in Schizosaccharomyces pombe (strain 972 / ATCC 24843) (Fission yeast).